The sequence spans 443 residues: Mitochondrial distribution and morphology protein 10 (443 aa).

It belongs to the MDM10 family. As to quaternary structure, component of the ER-mitochondria encounter structure (ERMES) or MDM complex, composed of MMM1, MDM10, MDM12 and MDM34. Associates with the mitochondrial outer membrane sorting assembly machinery SAM(core) complex.

It localises to the mitochondrion outer membrane. Its function is as follows. Component of the ERMES/MDM complex, which serves as a molecular tether to connect the endoplasmic reticulum and mitochondria. Components of this complex are involved in the control of mitochondrial shape and protein biogenesis and may function in phospholipid exchange. MDM10 is involved in the late assembly steps of the general translocase of the mitochondrial outer membrane (TOM complex). Functions in the TOM40-specific route of the assembly of outer membrane beta-barrel proteins, including the association of TOM40 with the receptor TOM22 and small TOM proteins. Can associate with the SAM(core) complex as well as the MDM12-MMM1 complex, both involved in late steps of the major beta-barrel assembly pathway, that is responsible for biogenesis of all outer membrane beta-barrel proteins. May act as a switch that shuttles between both complexes and channels precursor proteins into the TOM40-specific pathway. Plays a role in mitochondrial morphology and in the inheritance of mitochondria. The chain is Mitochondrial distribution and morphology protein 10 from Pyricularia oryzae (strain 70-15 / ATCC MYA-4617 / FGSC 8958) (Rice blast fungus).